The following is a 310-amino-acid chain: N-acetyl-gamma-glutamyl-phosphate reductase (310 aa).

The active site involves C117.

Belongs to the NAGSA dehydrogenase family. Type 2 subfamily.

It localises to the cytoplasm. It catalyses the reaction N-acetyl-L-glutamate 5-semialdehyde + phosphate + NADP(+) = N-acetyl-L-glutamyl 5-phosphate + NADPH + H(+). The protein operates within amino-acid biosynthesis; L-arginine biosynthesis; N(2)-acetyl-L-ornithine from L-glutamate: step 3/4. Catalyzes the NADPH-dependent reduction of N-acetyl-5-glutamyl phosphate to yield N-acetyl-L-glutamate 5-semialdehyde. This chain is N-acetyl-gamma-glutamyl-phosphate reductase, found in Rhizobium johnstonii (strain DSM 114642 / LMG 32736 / 3841) (Rhizobium leguminosarum bv. viciae).